We begin with the raw amino-acid sequence, 224 residues long: Jacalin-related lectin 24 (224 aa).

Residues 8–160 (MFKVGPIGSK…LTSIGIYVYP (153 aa)) enclose the Jacalin-type lectin domain.

It belongs to the jacalin lectin family.

The sequence is that of Jacalin-related lectin 24 (JAL24) from Arabidopsis thaliana (Mouse-ear cress).